Reading from the N-terminus, the 312-residue chain is Apulose-4-phosphate transketolase subunit B (312 aa).

This sequence belongs to the transketolase family. In terms of assembly, probable heterodimer composed of AptA and AptB. The cofactor is thiamine diphosphate.

The enzyme catalyses apulose 4-phosphate + D-glyceraldehyde 3-phosphate = D-xylulose 5-phosphate + dihydroxyacetone phosphate. The protein operates within carbohydrate metabolism. Its function is as follows. Involved in catabolism of D-apiose. Catalyzes the transfer of the glycolaldehyde group from apulose-4-phosphate to D-glyceraldehyde 3-phosphate, generating dihydroxyacetone phosphate and D-xylulose-5-phosphate. This chain is Apulose-4-phosphate transketolase subunit B, found in Phocaeicola vulgatus (strain ATCC 8482 / DSM 1447 / JCM 5826 / CCUG 4940 / NBRC 14291 / NCTC 11154) (Bacteroides vulgatus).